A 485-amino-acid polypeptide reads, in one-letter code: Expansin-like protein 8 (485 aa).

The N-terminal stretch at 1–21 (MRISIILLSLLFLSLHSLIKA) is a signal peptide. Topologically, residues 22-464 (DITKLSVCGS…QSGHHASSNT (443 aa)) are extracellular. The 114-residue stretch at 26-139 (LSVCGSARAV…QIVSCGYSGN (114 aa)) folds into the Expansin-like EG45 domain. Disulfide bonds link Cys-29–Cys-70 and Cys-73–Cys-134. Residues Asn-117 and Asn-365 are each glycosylated (N-linked (GlcNAc...) asparagine). Residues 408–436 (EVNNKPSTTSGTGTTSSKPSSSSGGVSGG) form a disordered region. Residues 414–431 (STTSGTGTTSSKPSSSSG) are compositionally biased toward low complexity. N-linked (GlcNAc...) asparagine glycosylation occurs at Asn-454. The helical transmembrane segment at 465-485 (NILLPTTFVFFISITILSLLF) threads the bilayer.

It belongs to the expansin family. Expansin A subfamily.

The protein resides in the membrane. In terms of biological role, may serve to lubricate the movement of the cellulose microfibrils during cell growth and wall extension and/or may serve to maintain the fluid state of the slug cell wall. The polypeptide is Expansin-like protein 8 (expl8) (Dictyostelium discoideum (Social amoeba)).